The primary structure comprises 388 residues: MAQNPLSKPTACLVLADGTVFYGTGFGATGQTVAELCFNTAMTGYQEIMTDPSYAGQIVTFTFPHIGNVGVTPEDDETTDPVAAGMVVKWDPTAASNWRAAEELKGWLARRGRIAIGGVDTRRLTRAIRQQGAPHVALAHDPEGKFDLAALIAAARGFAGLEGMDLAKDVTCAQSYRWDEMRWAWPEGYARQEAPKHKVVAIDYGAKRNILRCLASSGCDVTVLPATATAAEVLAHAPDGVFLSNGPGDPAATGEYAVPMIREILDTTSLPVFGICLGHQMLALALGGRTVKMNHGHHGANHPVKDLETGKVEITSMNHGFAVDAQSLPEGVVETHRSLFDGSNCGIRMSERPVFSVQYHPEASPGPQDSFYLFERFAAAMDAQKAEV.

The tract at residues 1-194 (MAQNPLSKPT…WPEGYARQEA (194 aa)) is CPSase. Residues Ser53, Gly246, and Gly248 each coordinate L-glutamine. The Glutamine amidotransferase type-1 domain maps to 198 to 387 (KVVAIDYGAK…AAAMDAQKAE (190 aa)). Cys276 (nucleophile) is an active-site residue. Positions 277, 280, 318, 320, and 321 each coordinate L-glutamine. Catalysis depends on residues His360 and Glu362.

This sequence belongs to the CarA family. In terms of assembly, composed of two chains; the small (or glutamine) chain promotes the hydrolysis of glutamine to ammonia, which is used by the large (or ammonia) chain to synthesize carbamoyl phosphate. Tetramer of heterodimers (alpha,beta)4.

It catalyses the reaction hydrogencarbonate + L-glutamine + 2 ATP + H2O = carbamoyl phosphate + L-glutamate + 2 ADP + phosphate + 2 H(+). The enzyme catalyses L-glutamine + H2O = L-glutamate + NH4(+). It participates in amino-acid biosynthesis; L-arginine biosynthesis; carbamoyl phosphate from bicarbonate: step 1/1. Its pathway is pyrimidine metabolism; UMP biosynthesis via de novo pathway; (S)-dihydroorotate from bicarbonate: step 1/3. Functionally, small subunit of the glutamine-dependent carbamoyl phosphate synthetase (CPSase). CPSase catalyzes the formation of carbamoyl phosphate from the ammonia moiety of glutamine, carbonate, and phosphate donated by ATP, constituting the first step of 2 biosynthetic pathways, one leading to arginine and/or urea and the other to pyrimidine nucleotides. The small subunit (glutamine amidotransferase) binds and cleaves glutamine to supply the large subunit with the substrate ammonia. The protein is Carbamoyl phosphate synthase small chain of Ruegeria pomeroyi (strain ATCC 700808 / DSM 15171 / DSS-3) (Silicibacter pomeroyi).